The sequence spans 156 residues: Small ribosomal subunit protein uS7 (156 aa).

Belongs to the universal ribosomal protein uS7 family. Part of the 30S ribosomal subunit. Contacts proteins S9 and S11.

Functionally, one of the primary rRNA binding proteins, it binds directly to 16S rRNA where it nucleates assembly of the head domain of the 30S subunit. Is located at the subunit interface close to the decoding center, probably blocks exit of the E-site tRNA. The polypeptide is Small ribosomal subunit protein uS7 (Salinispora tropica (strain ATCC BAA-916 / DSM 44818 / JCM 13857 / NBRC 105044 / CNB-440)).